Reading from the N-terminus, the 243-residue chain is tRNA pseudouridine synthase A (243 aa).

The Nucleophile role is filled by Asp-54. Position 112 (Tyr-112) interacts with substrate.

This sequence belongs to the tRNA pseudouridine synthase TruA family. As to quaternary structure, homodimer.

It catalyses the reaction uridine(38/39/40) in tRNA = pseudouridine(38/39/40) in tRNA. Its function is as follows. Formation of pseudouridine at positions 38, 39 and 40 in the anticodon stem and loop of transfer RNAs. This Onion yellows phytoplasma (strain OY-M) protein is tRNA pseudouridine synthase A.